Reading from the N-terminus, the 405-residue chain is Phosphopentomutase (405 aa).

6 residues coordinate Mn(2+): aspartate 10, aspartate 305, histidine 310, aspartate 346, histidine 347, and histidine 358.

Belongs to the phosphopentomutase family. It depends on Mn(2+) as a cofactor.

It is found in the cytoplasm. It catalyses the reaction 2-deoxy-alpha-D-ribose 1-phosphate = 2-deoxy-D-ribose 5-phosphate. The enzyme catalyses alpha-D-ribose 1-phosphate = D-ribose 5-phosphate. The protein operates within carbohydrate degradation; 2-deoxy-D-ribose 1-phosphate degradation; D-glyceraldehyde 3-phosphate and acetaldehyde from 2-deoxy-alpha-D-ribose 1-phosphate: step 1/2. In terms of biological role, isomerase that catalyzes the conversion of deoxy-ribose 1-phosphate (dRib-1-P) and ribose 1-phosphate (Rib-1-P) to deoxy-ribose 5-phosphate (dRib-5-P) and ribose 5-phosphate (Rib-5-P), respectively. This Methylorubrum extorquens (strain CM4 / NCIMB 13688) (Methylobacterium extorquens) protein is Phosphopentomutase.